The following is a 587-amino-acid chain: Lipoprotein LpqB (587 aa).

The signal sequence occupies residues 1-19; the sequence is MERLMRLTILLFLGAVLAG. A lipid anchor (N-palmitoyl cysteine) is attached at cysteine 20. Residue cysteine 20 is the site of S-diacylglycerol cysteine attachment.

It belongs to the LpqB lipoprotein family.

The protein resides in the cell membrane. The chain is Lipoprotein LpqB from Mycobacterium bovis (strain ATCC BAA-935 / AF2122/97).